A 182-amino-acid polypeptide reads, in one-letter code: ATP synthase subunit b 1 (182 aa).

The helical transmembrane segment at 24–44 (FADPAFWVSIAFLMVVGFVYI) threads the bilayer.

The protein belongs to the ATPase B chain family. In terms of assembly, F-type ATPases have 2 components, F(1) - the catalytic core - and F(0) - the membrane proton channel. F(1) has five subunits: alpha(3), beta(3), gamma(1), delta(1), epsilon(1). F(0) has three main subunits: a(1), b(2) and c(10-14). The alpha and beta chains form an alternating ring which encloses part of the gamma chain. F(1) is attached to F(0) by a central stalk formed by the gamma and epsilon chains, while a peripheral stalk is formed by the delta and b chains.

The protein localises to the cell inner membrane. In terms of biological role, f(1)F(0) ATP synthase produces ATP from ADP in the presence of a proton or sodium gradient. F-type ATPases consist of two structural domains, F(1) containing the extramembraneous catalytic core and F(0) containing the membrane proton channel, linked together by a central stalk and a peripheral stalk. During catalysis, ATP synthesis in the catalytic domain of F(1) is coupled via a rotary mechanism of the central stalk subunits to proton translocation. Component of the F(0) channel, it forms part of the peripheral stalk, linking F(1) to F(0). This is ATP synthase subunit b 1 from Rhodospirillum rubrum (strain ATCC 11170 / ATH 1.1.1 / DSM 467 / LMG 4362 / NCIMB 8255 / S1).